Reading from the N-terminus, the 542-residue chain is CTP synthase (542 aa).

An amidoligase domain region spans residues M1 to I265. A CTP-binding site is contributed by S13. S13 contributes to the UTP binding site. Residue S14–I19 participates in ATP binding. Y54 serves as a coordination point for L-glutamine. D71 contributes to the ATP binding site. Residues D71 and E139 each contribute to the Mg(2+) site. Residues D146–E148, K186–Q191, and K222 each bind CTP. UTP contacts are provided by residues K186 to Q191 and K222. The Glutamine amidotransferase type-1 domain occupies T291–L541. A353 provides a ligand contact to L-glutamine. The active-site Nucleophile; for glutamine hydrolysis is the C380. Residues F381–Q384, E404, and R469 contribute to the L-glutamine site. Active-site residues include H514 and E516.

It belongs to the CTP synthase family. In terms of assembly, homotetramer.

It catalyses the reaction UTP + L-glutamine + ATP + H2O = CTP + L-glutamate + ADP + phosphate + 2 H(+). The catalysed reaction is L-glutamine + H2O = L-glutamate + NH4(+). It carries out the reaction UTP + NH4(+) + ATP = CTP + ADP + phosphate + 2 H(+). Its pathway is pyrimidine metabolism; CTP biosynthesis via de novo pathway; CTP from UDP: step 2/2. With respect to regulation, allosterically activated by GTP, when glutamine is the substrate; GTP has no effect on the reaction when ammonia is the substrate. The allosteric effector GTP functions by stabilizing the protein conformation that binds the tetrahedral intermediate(s) formed during glutamine hydrolysis. Inhibited by the product CTP, via allosteric rather than competitive inhibition. Functionally, catalyzes the ATP-dependent amination of UTP to CTP with either L-glutamine or ammonia as the source of nitrogen. Regulates intracellular CTP levels through interactions with the four ribonucleotide triphosphates. The polypeptide is CTP synthase (Bartonella bacilliformis (strain ATCC 35685 / KC583 / Herrer 020/F12,63)).